Reading from the N-terminus, the 507-residue chain is Proline--tRNA ligase (507 aa).

It belongs to the class-II aminoacyl-tRNA synthetase family. ProS type 3 subfamily. In terms of assembly, homodimer.

The protein localises to the cytoplasm. It catalyses the reaction tRNA(Pro) + L-proline + ATP = L-prolyl-tRNA(Pro) + AMP + diphosphate. In terms of biological role, catalyzes the attachment of proline to tRNA(Pro) in a two-step reaction: proline is first activated by ATP to form Pro-AMP and then transferred to the acceptor end of tRNA(Pro). The chain is Proline--tRNA ligase from Protochlamydia amoebophila (strain UWE25).